Here is a 588-residue protein sequence, read N- to C-terminus: Aspartate--tRNA ligase (588 aa).

Glu172 is a binding site for L-aspartate. An aspartate region spans residues Gln196–Lys199. An L-aspartate-binding site is contributed by Arg218. Residues Arg218–Glu220 and Gln227 contribute to the ATP site. His449 is an L-aspartate binding site. Glu483 contributes to the ATP binding site. Residue Arg490 coordinates L-aspartate. Gly535–Arg538 serves as a coordination point for ATP.

The protein belongs to the class-II aminoacyl-tRNA synthetase family. Type 1 subfamily. As to quaternary structure, homodimer.

The protein resides in the cytoplasm. The catalysed reaction is tRNA(Asp) + L-aspartate + ATP = L-aspartyl-tRNA(Asp) + AMP + diphosphate. Catalyzes the attachment of L-aspartate to tRNA(Asp) in a two-step reaction: L-aspartate is first activated by ATP to form Asp-AMP and then transferred to the acceptor end of tRNA(Asp). The polypeptide is Aspartate--tRNA ligase (Haemophilus influenzae (strain PittEE)).